A 353-amino-acid polypeptide reads, in one-letter code: Photosystem II D2 protein (353 aa).

N-acetylthreonine is present on Thr2. Thr2 is modified (phosphothreonine). Residues 41–61 (CAYFALGGWFTGTTFVTSWYT) traverse the membrane as a helical segment. His118 is a chlorophyll a binding site. The chain crosses the membrane as a helical span at residues 125 to 141 (GFMLRQFELARSVQLRP). Residues Gln130 and Asn143 each coordinate pheophytin a. Residues 153 to 166 (VFVSVFLIYPLGQS) form a helical membrane-spanning segment. Residue His198 coordinates chlorophyll a. The helical transmembrane segment at 208–228 (AALLCAIHGATVENTLFEDGD) threads the bilayer. Positions 215 and 262 each coordinate a plastoquinone. Residue His215 participates in Fe cation binding. Residue His269 participates in Fe cation binding. The helical transmembrane segment at 279-295 (GLWMSALGVVGLALNLR) threads the bilayer.

The protein belongs to the reaction center PufL/M/PsbA/D family. In terms of assembly, PSII is composed of 1 copy each of membrane proteins PsbA, PsbB, PsbC, PsbD, PsbE, PsbF, PsbH, PsbI, PsbJ, PsbK, PsbL, PsbM, PsbT, PsbX, PsbY, PsbZ, Psb30/Ycf12, at least 3 peripheral proteins of the oxygen-evolving complex and a large number of cofactors. It forms dimeric complexes. Requires The D1/D2 heterodimer binds P680, chlorophylls that are the primary electron donor of PSII, and subsequent electron acceptors. It shares a non-heme iron and each subunit binds pheophytin, quinone, additional chlorophylls, carotenoids and lipids. There is also a Cl(-1) ion associated with D1 and D2, which is required for oxygen evolution. The PSII complex binds additional chlorophylls, carotenoids and specific lipids. as cofactor.

It localises to the plastid. The protein resides in the chloroplast thylakoid membrane. It catalyses the reaction 2 a plastoquinone + 4 hnu + 2 H2O = 2 a plastoquinol + O2. In terms of biological role, photosystem II (PSII) is a light-driven water:plastoquinone oxidoreductase that uses light energy to abstract electrons from H(2)O, generating O(2) and a proton gradient subsequently used for ATP formation. It consists of a core antenna complex that captures photons, and an electron transfer chain that converts photonic excitation into a charge separation. The D1/D2 (PsbA/PsbD) reaction center heterodimer binds P680, the primary electron donor of PSII as well as several subsequent electron acceptors. D2 is needed for assembly of a stable PSII complex. The chain is Photosystem II D2 protein from Populus deltoides (Eastern poplar).